The sequence spans 510 residues: Archaeal glutamate synthase [NADPH] (510 aa).

4Fe-4S ferredoxin-type domains follow at residues 10–37 (YKVE…YRRE) and 38–68 (GDRI…IKEN). Residues Cys19, Cys22, Cys25, Cys29, Cys48, Cys51, Cys54, and Cys58 each coordinate [4Fe-4S] cluster.

It belongs to the glutamate synthase family. The cofactor is FMN.

The enzyme catalyses 2 L-glutamate + NADP(+) = L-glutamine + 2-oxoglutarate + NADPH + H(+). The chain is Archaeal glutamate synthase [NADPH] from Methanocaldococcus jannaschii (strain ATCC 43067 / DSM 2661 / JAL-1 / JCM 10045 / NBRC 100440) (Methanococcus jannaschii).